Consider the following 284-residue polypeptide: ATP synthase gamma chain (284 aa).

Belongs to the ATPase gamma chain family. F-type ATPases have 2 components, CF(1) - the catalytic core - and CF(0) - the membrane proton channel. CF(1) has five subunits: alpha(3), beta(3), gamma(1), delta(1), epsilon(1). CF(0) has three main subunits: a, b and c.

The protein localises to the cell membrane. Produces ATP from ADP in the presence of a proton gradient across the membrane. The gamma chain is believed to be important in regulating ATPase activity and the flow of protons through the CF(0) complex. In Pelotomaculum thermopropionicum (strain DSM 13744 / JCM 10971 / SI), this protein is ATP synthase gamma chain.